A 104-amino-acid polypeptide reads, in one-letter code: Ig lambda-1 chain C region (104 aa).

The Ig-like domain maps to 6–99; sequence PSVTLFPPSS…EENTVEKSLS (94 aa). Cys-27 and Cys-85 are disulfide-bonded.

The chain is Ig lambda-1 chain C region from Rattus norvegicus (Rat).